Consider the following 406-residue polypeptide: Arginine deiminase (406 aa).

The active-site Amidino-cysteine intermediate is cysteine 396.

The protein belongs to the arginine deiminase family.

It localises to the cytoplasm. The catalysed reaction is L-arginine + H2O = L-citrulline + NH4(+). The protein operates within amino-acid degradation; L-arginine degradation via ADI pathway; carbamoyl phosphate from L-arginine: step 1/2. In Aliivibrio salmonicida (strain LFI1238) (Vibrio salmonicida (strain LFI1238)), this protein is Arginine deiminase.